A 346-amino-acid chain; its full sequence is tRNA N6-adenosine threonylcarbamoyltransferase (346 aa).

Fe cation contacts are provided by His-110 and His-114. Residues Leu-132–Gly-136, Asp-165, Gly-178, and Asn-274 each bind substrate. Position 298 (Asp-298) interacts with Fe cation.

This sequence belongs to the KAE1 / TsaD family. Requires Fe(2+) as cofactor.

Its subcellular location is the cytoplasm. It catalyses the reaction L-threonylcarbamoyladenylate + adenosine(37) in tRNA = N(6)-L-threonylcarbamoyladenosine(37) in tRNA + AMP + H(+). Functionally, required for the formation of a threonylcarbamoyl group on adenosine at position 37 (t(6)A37) in tRNAs that read codons beginning with adenine. Is involved in the transfer of the threonylcarbamoyl moiety of threonylcarbamoyl-AMP (TC-AMP) to the N6 group of A37, together with TsaE and TsaB. TsaD likely plays a direct catalytic role in this reaction. This Borreliella burgdorferi (strain ATCC 35210 / DSM 4680 / CIP 102532 / B31) (Borrelia burgdorferi) protein is tRNA N6-adenosine threonylcarbamoyltransferase.